The primary structure comprises 545 residues: MEFAELIKTPRVDNVVLHRPFYTAVEGTLCLTGHHLILSSRQDNTEELWLLHSNIDAIDKRFVGSLGTIIIKCKDFRIIQLDIPGMEECLNIASSIEALSTLDSVTLMYPFFYRPMFEVIEDGWHSFLPEQEFEFYSSATSEWRLSYINKDFSICPSYPPTVIVPKSVDDEALRKVAAFRHGGRFPVLSYYHKKNGMVIMRSGQPLTGTNGRRCKEDEKLINATLRAGKRGYLIDTRSLNVAQQARAKGGGFEQEAHYPQWRRIHKSIERYHVLQESLIKLVEACNEQTHNMDRWLGKLEASNWLTHIKEILTTACLAAQCIDREGASVLIHGTEGTDSTLQVTSLAQIILEPRSRTIRGFEALIEREWLQAGHPFQQRCAQSAYCSSKQKWEAPVFLLFLDCVWQILRQFPCSFEFNEHFLIMLFEHAYASQFGTFLGNNESERCKLKLQQKTMSLWSWVNRPGELSKFTNPLFEANNLVIWPSVAPQSLQLWEGIFLRWSRSSKYLDEAYEEMVNIIEYNKELQAKVNVLRRQLAELETEDGL.

N-acetylmethionine is present on Met-1. The region spanning 4-99 is the GRAM domain; sequence AELIKTPRVD…LNIASSIEAL (96 aa). The Myotubularin phosphatase domain occupies 123–498; it reads GWHSFLPEQE…QSLQLWEGIF (376 aa). Residues 508–542 are a coiled coil; the sequence is LDEAYEEMVNIIEYNKELQAKVNVLRRQLAELETE.

This sequence belongs to the protein-tyrosine phosphatase family. Non-receptor class myotubularin subfamily. As to quaternary structure, homodimer. Heterodimer (via C-terminus) with lipid phosphatase MTMR6 (via C-terminus). Heterodimer (via coiled coil domain) with lipid phosphatase MTMR7 (via C-terminus).

The protein localises to the cytoplasm. The protein resides in the cell projection. Its subcellular location is the ruffle membrane. It is found in the perinuclear region. It localises to the endoplasmic reticulum. Functionally, acts as an adapter for myotubularin-related phosphatases. Increases lipid phosphatase MTMR6 catalytic activity, specifically towards phosphatidylinositol 3,5-bisphosphate, and MTMR6 binding affinity for phosphorylated phosphatidylinositols. Positively regulates lipid phosphatase MTMR7 catalytic activity. The formation of the MTMR6-MTMR9 complex, stabilizes both MTMR6 and MTMR9 protein levels. Plays a role in the late stages of macropinocytosis possibly by regulating MTMR6-mediated dephosphorylation of phosphatidylinositol 3-phosphate in membrane ruffles. Negatively regulates DNA damage-induced apoptosis, in part via its association with MTMR6. Does not bind mono-, di- and tri-phosphorylated phosphatidylinositols, phosphatidic acid and phosphatidylserine. In Mus musculus (Mouse), this protein is Myotubularin-related protein 9 (Mtmr9).